The chain runs to 153 residues: Transcriptional repressor NrdR (153 aa).

A zinc finger lies at 3-34; the sequence is CPFCNHLHDKVVDSRESKEGDAIRRRRECLEC. Residues 49 to 139 enclose the ATP-cone domain; that stretch reads YMVVKKDGRR…VYRDFQDEQA (91 aa).

This sequence belongs to the NrdR family. Zn(2+) is required as a cofactor.

Negatively regulates transcription of bacterial ribonucleotide reductase nrd genes and operons by binding to NrdR-boxes. This Solibacter usitatus (strain Ellin6076) protein is Transcriptional repressor NrdR.